Consider the following 701-residue polypeptide: Ribosomal RNA large subunit methyltransferase K/L (701 aa).

The THUMP domain occupies 44 to 155 (QAYKICLWSR…SDKLTVYLDL (112 aa)).

This sequence belongs to the methyltransferase superfamily. RlmKL family.

The protein localises to the cytoplasm. The enzyme catalyses guanosine(2445) in 23S rRNA + S-adenosyl-L-methionine = N(2)-methylguanosine(2445) in 23S rRNA + S-adenosyl-L-homocysteine + H(+). It carries out the reaction guanosine(2069) in 23S rRNA + S-adenosyl-L-methionine = N(2)-methylguanosine(2069) in 23S rRNA + S-adenosyl-L-homocysteine + H(+). In terms of biological role, specifically methylates the guanine in position 2445 (m2G2445) and the guanine in position 2069 (m7G2069) of 23S rRNA. This is Ribosomal RNA large subunit methyltransferase K/L from Pseudoalteromonas atlantica (strain T6c / ATCC BAA-1087).